A 414-amino-acid polypeptide reads, in one-letter code: NADH kinase POS5, mitochondrial (414 aa).

The protein belongs to the NAD kinase family.

The protein resides in the mitochondrion matrix. It catalyses the reaction NADH + ATP = ADP + NADPH + H(+). Functionally, phosphorylates both NADH and NAD(+), with a twofold preference for NADH. Anti-oxidant factor and key source of the cellular reductant NADPH. The sequence is that of NADH kinase POS5, mitochondrial (POS5) from Saccharomyces cerevisiae (strain ATCC 204508 / S288c) (Baker's yeast).